The following is a 224-amino-acid chain: Protein LURP-one-related 1 (224 aa).

The tract at residues 1-23 is disordered; that stretch reads MQQPYEYRYPQGTGPSAPPPPPK.

The protein belongs to the LOR family.

Its function is as follows. Might be related to the phospholipid scramblase and tubby-like superfamily of membrane tethered transcription factors. In Arabidopsis thaliana (Mouse-ear cress), this protein is Protein LURP-one-related 1.